A 58-amino-acid chain; its full sequence is Metallothionein-1 (58 aa).

The interval 1 to 28 (PGPCCKDKCECAEGGCKTGCKCTSCRCA) is beta. Positions 4, 5, 9, 11, 16, 20, 22, 25, 27, 30, 33, 37, 39, 45, 49, 53, 55, and 56 each coordinate a divalent metal cation. The alpha stretch occupies residues 29 to 58 (PCEKCTSGCKCPSKDECAKTCSKPCSCCXX).

It belongs to the metallothionein superfamily. Type 3 family.

Functionally, metallothioneins have a high content of cysteine residues that bind various heavy metals. The different forms of lobster metallothioneins may have different biological functions. Class I MTS in marine crustacea are involved in the sequestration of elevated levels of heavy-metal ions. Binds 6 metal ions. Known to bind cadmium. This Homarus americanus (American lobster) protein is Metallothionein-1.